The sequence spans 952 residues: Protein translocase subunit SecA (952 aa).

ATP is bound by residues Gln135, 153-157 (GEGKT), and Asp575. The segment covering 907–921 (AAPAAAIPGVSAKAA) has biased composition (low complexity). The segment at 907–946 (AAPAAAIPGVSAKAATQSTTPAAKEIGRNDPCPCGSGKKY) is disordered. 4 residues coordinate Zn(2+): Cys938, Cys940, Cys949, and Cys950.

It belongs to the SecA family. As to quaternary structure, monomer and homodimer. Part of the essential Sec protein translocation apparatus which comprises SecA, SecYEG and auxiliary proteins SecDF. Other proteins may also be involved. It depends on Zn(2+) as a cofactor.

The protein resides in the cell membrane. It localises to the cytoplasm. It catalyses the reaction ATP + H2O + cellular proteinSide 1 = ADP + phosphate + cellular proteinSide 2.. Functionally, part of the Sec protein translocase complex. Interacts with the SecYEG preprotein conducting channel. Has a central role in coupling the hydrolysis of ATP to the transfer of proteins into and across the cell membrane, serving as an ATP-driven molecular motor driving the stepwise translocation of polypeptide chains across the membrane. The polypeptide is Protein translocase subunit SecA (Dehalococcoides mccartyi (strain CBDB1)).